The sequence spans 331 residues: Ribosomal RNA small subunit methyltransferase H (331 aa).

Residues 38-40 (GGY), Asp56, Phe83, Asp100, and Gln107 each bind S-adenosyl-L-methionine. The disordered stretch occupies residues 289-331 (AELAENPRARSARLRVGVRTDAPAGKVDPQALGTPLIPKKGRR).

This sequence belongs to the methyltransferase superfamily. RsmH family.

Its subcellular location is the cytoplasm. It carries out the reaction cytidine(1402) in 16S rRNA + S-adenosyl-L-methionine = N(4)-methylcytidine(1402) in 16S rRNA + S-adenosyl-L-homocysteine + H(+). Specifically methylates the N4 position of cytidine in position 1402 (C1402) of 16S rRNA. The chain is Ribosomal RNA small subunit methyltransferase H from Cereibacter sphaeroides (strain ATCC 17029 / ATH 2.4.9) (Rhodobacter sphaeroides).